We begin with the raw amino-acid sequence, 295 residues long: Pyridoxal 5'-phosphate synthase subunit PdxS (295 aa).

A D-ribose 5-phosphate-binding site is contributed by aspartate 25. Residue lysine 82 is the Schiff-base intermediate with D-ribose 5-phosphate of the active site. Glycine 154 lines the D-ribose 5-phosphate pocket. Arginine 166 is a binding site for D-glyceraldehyde 3-phosphate. Residues glycine 215 and 236-237 (GS) contribute to the D-ribose 5-phosphate site.

The protein belongs to the PdxS/SNZ family. In terms of assembly, in the presence of PdxT, forms a dodecamer of heterodimers.

The catalysed reaction is aldehydo-D-ribose 5-phosphate + D-glyceraldehyde 3-phosphate + L-glutamine = pyridoxal 5'-phosphate + L-glutamate + phosphate + 3 H2O + H(+). The protein operates within cofactor biosynthesis; pyridoxal 5'-phosphate biosynthesis. Its function is as follows. Catalyzes the formation of pyridoxal 5'-phosphate from ribose 5-phosphate (RBP), glyceraldehyde 3-phosphate (G3P) and ammonia. The ammonia is provided by the PdxT subunit. Can also use ribulose 5-phosphate and dihydroxyacetone phosphate as substrates, resulting from enzyme-catalyzed isomerization of RBP and G3P, respectively. This Natranaerobius thermophilus (strain ATCC BAA-1301 / DSM 18059 / JW/NM-WN-LF) protein is Pyridoxal 5'-phosphate synthase subunit PdxS.